A 1463-amino-acid chain; its full sequence is Secretory phospholipase A2 receptor (1463 aa).

Residues 1–20 form the signal peptide; the sequence is MPLLSLSLLLLLLQVPAGSA. Residues 21–1392 are Extracellular-facing; it reads ETAAWAVTPE…IHTVKKHPGK (1372 aa). Positions 38-115 constitute a Ricin B-type lectin domain; sequence KGIFIIQSEN…CDSTHVSLKW (78 aa). N-linked (GlcNAc...) asparagine glycosylation occurs at Asn-93. The 49-residue stretch at 173-221 folds into the Fibronectin type-II domain; it reads AHGTPCMFPFQYNQQWHHECTREGREDNLLWCATTSRYERDEKWGFCPD. 16 disulfides stabilise this stretch: Cys-178-Cys-204, Cys-192-Cys-219, Cys-260-Cys-354, Cys-330-Cys-346, Cys-406-Cys-501, Cys-478-Cys-493, Cys-617-Cys-634, Cys-699-Cys-796, Cys-774-Cys-788, Cys-840-Cys-938, Cys-915-Cys-930, Cys-992-Cys-1096, Cys-1068-Cys-1088, Cys-1209-Cys-1223, Cys-1280-Cys-1377, and Cys-1354-Cys-1369. C-type lectin domains are found at residues 229-353, 357-500, 504-641, 646-795, 799-937, 941-1095, 1099-1230, and 1235-1376; these read CDAV…LPYV, YLNP…LFYL, TGLV…KAMS, PVEN…REWI, PRDV…MPSI, KKVW…YGFV, MQDA…LQGA, and PTET…KGFI. N-linked (GlcNAc...) asparagine glycosylation is present at Asn-454. Asn-1057 is a glycosylation site (N-linked (GlcNAc...) asparagine). Residues 1393 to 1421 form a helical membrane-spanning segment; that stretch reads GPSHSVIPLTVALTLLVILAISTLSFCMY. Over 1422-1463 the chain is Cytoplasmic; it reads KHSHIIFGRLAQFRNPYYPSANFSTVHLEENILISDLEKNDQ. Residues 1436–1442 carry the Endocytosis signal motif; that stretch reads NPYYPSA.

In terms of assembly, interacts with sPLA2-IB/PLA2G1B; this interaction mediates intracellular signaling as well as clearance of extracellular sPLA2-IB/PLA2G1B via endocytotic pathway. Interacts with sPLA2-X/PLA2G10; this interaction mediates sPLA2-X/PLA2G10 clearance and inactivation. The secretory phospholipase A2 receptor form may be produced by the action of metalloproteinases. It contains all extracellular domains and only lacks transmembrane and cytosolic regions. It is however unclear whether this form is produced by proteolytic cleavage as suggested by some experiments, or by alternative splicing.

The protein resides in the cell membrane. It localises to the secreted. Functionally, receptor for secretory phospholipase A2 (sPLA2). Also able to bind to snake PA2-like toxins. Although its precise function remains unclear, binding of sPLA2 to its receptor participates in both positive and negative regulation of sPLA2 functions as well as clearance of sPLA2. Binding of sPLA2-IB/PLA2G1B induces various effects depending on the cell type, such as activation of the mitogen-activated protein kinase (MAPK) cascade to induce cell proliferation, the production of lipid mediators, selective release of arachidonic acid in bone marrow-derived mast cells. In neutrophils, binding of sPLA2-IB/PLA2G1B can activate p38 MAPK to stimulate elastase release and cell adhesion. May be involved in responses in pro-inflammatory cytokine productions during endotoxic shock. Also has endocytic properties and rapidly internalizes sPLA2 ligands, which is particularly important for the clearance of extracellular sPLA2s to protect their potent enzymatic activities. The soluble secretory phospholipase A2 receptor form is circulating and acts as a negative regulator of sPLA2 functions by blocking the biological functions of sPLA2-IB/PLA2G1B and sPLA2-X/PLA2G10. The sequence is that of Secretory phospholipase A2 receptor (PLA2R1) from Bos taurus (Bovine).